The primary structure comprises 155 residues: MAPVTLSTVDTDLKDVIQHLFEIQSAVHGYLGPETQQELVRKIKNLTLALSTLSSHTQSHAPDADTAQANPSDPPISTIELPPEIIDYVDAARNPDIYTREFVELVQRGNQDLKGKKEAFAGFRDVLAREMRSAMPECRGEVDRVVRATGGGEES.

The interval 54–80 (SSHTQSHAPDADTAQANPSDPPISTIE) is disordered.

This sequence belongs to the Mediator complex subunit 10 family. As to quaternary structure, component of the Mediator complex.

The protein resides in the nucleus. Functionally, component of the Mediator complex, a coactivator involved in the regulated transcription of nearly all RNA polymerase II-dependent genes. Mediator functions as a bridge to convey information from gene-specific regulatory proteins to the basal RNA polymerase II transcription machinery. Mediator is recruited to promoters by direct interactions with regulatory proteins and serves as a scaffold for the assembly of a functional preinitiation complex with RNA polymerase II and the general transcription factors. In Aspergillus terreus (strain NIH 2624 / FGSC A1156), this protein is Mediator of RNA polymerase II transcription subunit 10 (nut2).